We begin with the raw amino-acid sequence, 437 residues long: Histidinol dehydrogenase (437 aa).

3 residues coordinate NAD(+): tyrosine 137, glutamine 199, and asparagine 222. Substrate is bound by residues serine 245, glutamine 267, and histidine 270. Positions 267 and 270 each coordinate Zn(2+). Active-site proton acceptor residues include glutamate 335 and histidine 336. The substrate site is built by histidine 336, aspartate 369, glutamate 423, and histidine 428. Residue aspartate 369 participates in Zn(2+) binding. Position 428 (histidine 428) interacts with Zn(2+).

It belongs to the histidinol dehydrogenase family. It depends on Zn(2+) as a cofactor.

The enzyme catalyses L-histidinol + 2 NAD(+) + H2O = L-histidine + 2 NADH + 3 H(+). It functions in the pathway amino-acid biosynthesis; L-histidine biosynthesis; L-histidine from 5-phospho-alpha-D-ribose 1-diphosphate: step 9/9. In terms of biological role, catalyzes the sequential NAD-dependent oxidations of L-histidinol to L-histidinaldehyde and then to L-histidine. The sequence is that of Histidinol dehydrogenase from Parasynechococcus marenigrum (strain WH8102).